A 72-amino-acid chain; its full sequence is Protein SlyX (72 aa).

The protein belongs to the SlyX family.

The chain is Protein SlyX from Cronobacter sakazakii (strain ATCC BAA-894) (Enterobacter sakazakii).